The following is a 499-amino-acid chain: Glycerol kinase (499 aa).

Threonine 13 contributes to the ADP binding site. ATP is bound by residues threonine 13, threonine 14, and serine 15. Residue threonine 13 participates in sn-glycerol 3-phosphate binding. Arginine 17 contributes to the ADP binding site. Sn-glycerol 3-phosphate-binding residues include arginine 83, glutamate 84, tyrosine 135, and aspartate 244. Arginine 83, glutamate 84, tyrosine 135, aspartate 244, and glutamine 245 together coordinate glycerol. 2 residues coordinate ADP: threonine 266 and glycine 309. ATP is bound by residues threonine 266, glycine 309, glutamine 313, and glycine 410. Residues glycine 410 and asparagine 414 each coordinate ADP.

Belongs to the FGGY kinase family.

It catalyses the reaction glycerol + ATP = sn-glycerol 3-phosphate + ADP + H(+). It functions in the pathway polyol metabolism; glycerol degradation via glycerol kinase pathway; sn-glycerol 3-phosphate from glycerol: step 1/1. With respect to regulation, inhibited by fructose 1,6-bisphosphate (FBP). Functionally, key enzyme in the regulation of glycerol uptake and metabolism. Catalyzes the phosphorylation of glycerol to yield sn-glycerol 3-phosphate. This Paraburkholderia xenovorans (strain LB400) protein is Glycerol kinase.